A 357-amino-acid chain; its full sequence is Holliday junction branch migration complex subunit RuvB (357 aa).

The segment at 3-193 is large ATPase domain (RuvB-L); the sequence is WDDTTDAEAA…FGFTAHMEFY (191 aa). ATP is bound by residues L32, R33, G74, K77, T78, T79, 140–142, R183, Y193, and R230; that span reads EDF. T78 provides a ligand contact to Mg(2+). The small ATPAse domain (RuvB-S) stretch occupies residues 194–264; that stretch reads GPAELERVIH…IAAAALAVYE (71 aa). Residues 267-357 form a head domain (RuvB-H) region; sequence ARGLDRLDRG…GNGQPDLFGA (91 aa). DNA contacts are provided by R303, R322, and R327. The tract at residues 337–357 is disordered; it reads LGLTPPRPQSSGNGQPDLFGA.

It belongs to the RuvB family. Homohexamer. Forms an RuvA(8)-RuvB(12)-Holliday junction (HJ) complex. HJ DNA is sandwiched between 2 RuvA tetramers; dsDNA enters through RuvA and exits via RuvB. An RuvB hexamer assembles on each DNA strand where it exits the tetramer. Each RuvB hexamer is contacted by two RuvA subunits (via domain III) on 2 adjacent RuvB subunits; this complex drives branch migration. In the full resolvosome a probable DNA-RuvA(4)-RuvB(12)-RuvC(2) complex forms which resolves the HJ.

It is found in the cytoplasm. The enzyme catalyses ATP + H2O = ADP + phosphate + H(+). Functionally, the RuvA-RuvB-RuvC complex processes Holliday junction (HJ) DNA during genetic recombination and DNA repair, while the RuvA-RuvB complex plays an important role in the rescue of blocked DNA replication forks via replication fork reversal (RFR). RuvA specifically binds to HJ cruciform DNA, conferring on it an open structure. The RuvB hexamer acts as an ATP-dependent pump, pulling dsDNA into and through the RuvAB complex. RuvB forms 2 homohexamers on either side of HJ DNA bound by 1 or 2 RuvA tetramers; 4 subunits per hexamer contact DNA at a time. Coordinated motions by a converter formed by DNA-disengaged RuvB subunits stimulates ATP hydrolysis and nucleotide exchange. Immobilization of the converter enables RuvB to convert the ATP-contained energy into a lever motion, pulling 2 nucleotides of DNA out of the RuvA tetramer per ATP hydrolyzed, thus driving DNA branch migration. The RuvB motors rotate together with the DNA substrate, which together with the progressing nucleotide cycle form the mechanistic basis for DNA recombination by continuous HJ branch migration. Branch migration allows RuvC to scan DNA until it finds its consensus sequence, where it cleaves and resolves cruciform DNA. The sequence is that of Holliday junction branch migration complex subunit RuvB from Streptomyces coelicolor (strain ATCC BAA-471 / A3(2) / M145).